Reading from the N-terminus, the 336-residue chain is Large ribosomal subunit protein uL1m (336 aa).

A mitochondrion-targeting transit peptide spans 1 to 50 (MAAAVRCLRRVLIHHQRHCLCKMASQASLYPCSVNSLLHNRHFAAAAAAA). At Ser85 the chain carries Phosphoserine.

This sequence belongs to the universal ribosomal protein uL1 family.

Its subcellular location is the mitochondrion. The polypeptide is Large ribosomal subunit protein uL1m (Mrpl1) (Mus musculus (Mouse)).